The primary structure comprises 1091 residues: MSEGTVKENNNEEFNAYHTLTTEEAAEFIGTSLTEGLTQDESLRRLKAVGENTLGDDTKIDYKAMVLHQVCNAMIMVLVISMAISFAVRDWITGGVISFVIAVNVLIGLVQEYKATKTMNSLKNLSSPNAHVIRNGKSETINSKDVVPGDICLVKVGDTIPADLRLIETKNFDTDESLLTGESLPVSKDANLVFGKEEETSVGDRLNLAFSSSAVVKGRAKGIVIKTALNSEIGKIAKSLQGDSGLISRDPSKSWLQNTWISTKKVTGAFLGTNVGTPLHRKLSKLAVLLFWIAVLFAIIVMASQKFDVDKRVAIYAICVALSMIPSSLVVVLTITMSVGAAVMVSRNVIVRKLDSLEALGAVNDICSDKTGTLTQGKMLARQIWIPRFGTITISNSDDPFNPNEGNVSLIPRFSPYEYSHNEDGDVGILQNFKDRLYEKDLPEDIDMDLFQKWLETATLANIATVFKDDATDCWKAHGDPTEIAIQVFATKMDLPHNALTGEKSTNQSNENDQSSLSQHNEKPGSAQFEHIAEFPFDSTVKRMSSVYYNNHNETYNIYGKGAFESIISCCSSWYGKDGVKITPLTDCDVETIRKNVYSLSNEGLRVLGFASKSFTKDQVNDDQLKNITSNRATAESDLVFLGLIGIYDPPRNETAGAVKKFHQAGINVHMLTGDFVGTAKAIAQEVGILPTNLYHYSQEIVDSMVMTGSQFDGLSEEEVDDLPVLPLVIARCSPQTKVRMIEALHRRKKFCAMTGDGVNDSPSLKMANVGIAMGINGSDVSKEASDIVLSDDNFASILNAVEEGRRMTDNIQKFVLQLLAENVAQALYLIIGLVFRDENGKSVFPLSPVEVLWIIVVTSCFPAMGLGLEKAAPDLMDRPPHDSEVGIFTWEVIIDTFAYGIIMTGSCMASFTGSLYGINSGRLGHDCDGTYNSSCRDVYRSRSAAFATMTWCALILAWEVVDMRRSFFRMHPDTDSPVKEFFRSIWGNQFLFWSIIFGFVSAFPVVYIPVINDKVFLHKPIGAEWGLAIAFTIAFWIGAELYKCGKRRYFKTQRAHNPENDLESNNKRDPFEAYSTSTTIHTEVNIGIKQ.

Residues 1–63 (MSEGTVKENN…LGDDTKIDYK (63 aa)) lie on the Cytoplasmic side of the membrane. Residues 64–84 (AMVLHQVCNAMIMVLVISMAI) form a helical membrane-spanning segment. Residues 85–90 (SFAVRD) are Extracellular-facing. The helical transmembrane segment at 91–111 (WITGGVISFVIAVNVLIGLVQ) threads the bilayer. At 112–282 (EYKATKTMNS…TNVGTPLHRK (171 aa)) the chain is on the cytoplasmic side. The chain crosses the membrane as a helical span at residues 283-303 (LSKLAVLLFWIAVLFAIIVMA). The Extracellular portion of the chain corresponds to 304-312 (SQKFDVDKR). A helical transmembrane segment spans residues 313 to 333 (VAIYAICVALSMIPSSLVVVL). Over 334–815 (TITMSVGAAV…RRMTDNIQKF (482 aa)) the chain is Cytoplasmic. Asp369 serves as the catalytic 4-aspartylphosphate intermediate. 2 residues coordinate Mg(2+): Asp369 and Thr371. Residues Thr371 and Glu483 each contribute to the ATP site. The disordered stretch occupies residues 499-525 (ALTGEKSTNQSNENDQSSLSQHNEKPG). The span at 503 to 519 (EKSTNQSNENDQSSLSQ) shows a compositional bias: polar residues. Residues Lys561, Arg606, Thr673, Gly674, Asp675, Arg732, and Lys738 each coordinate ATP. Residue Asp757 participates in Mg(2+) binding. Asn760 is a binding site for ATP. A helical membrane pass occupies residues 816 to 836 (VLQLLAENVAQALYLIIGLVF). Residues 837 to 848 (RDENGKSVFPLS) are Extracellular-facing. Residues 849–869 (PVEVLWIIVVTSCFPAMGLGL) traverse the membrane as a helical segment. Residues 870–885 (EKAAPDLMDRPPHDSE) lie on the Cytoplasmic side of the membrane. The chain crosses the membrane as a helical span at residues 886 to 906 (VGIFTWEVIIDTFAYGIIMTG). The Extracellular portion of the chain corresponds to 907–943 (SCMASFTGSLYGINSGRLGHDCDGTYNSSCRDVYRSR). The chain crosses the membrane as a helical span at residues 944–964 (SAAFATMTWCALILAWEVVDM). Residues 965–991 (RRSFFRMHPDTDSPVKEFFRSIWGNQF) are Cytoplasmic-facing. The helical transmembrane segment at 992–1012 (LFWSIIFGFVSAFPVVYIPVI) threads the bilayer. Topologically, residues 1013–1021 (NDKVFLHKP) are extracellular. The chain crosses the membrane as a helical span at residues 1022-1042 (IGAEWGLAIAFTIAFWIGAEL). Topologically, residues 1043-1091 (YKCGKRRYFKTQRAHNPENDLESNNKRDPFEAYSTSTTIHTEVNIGIKQ) are cytoplasmic.

This sequence belongs to the cation transport ATPase (P-type) (TC 3.A.3) family. Type IID subfamily. Requires Mg(2+) as cofactor. Post-translationally, the active site is phosphorylated in presence of sodium or potassium and in conditions of higher pH. Not phosphorylated in presence of calcium ions.

The protein resides in the cell membrane. It catalyses the reaction Na(+)(in) + ATP + H2O = Na(+)(out) + ADP + phosphate + H(+). The enzyme catalyses K(+)(in) + ATP + H2O = K(+)(out) + ADP + phosphate + H(+). In terms of biological role, catalyzes the hydrolysis of ATP coupled with the export of sodium and potassium from the cell. May export potassium less efficiently. May transport other cations such as lithium. Sodium/potassium efflux ATPases are involved in salt tolerance and maintaining the membrane potential across the plasma membrane in high salinity (Na+) or alkaline (K+) environments. The polypeptide is Sodium/potassium exporting P-type ATPase 2 (Saccharomyces cerevisiae (strain ATCC 204508 / S288c) (Baker's yeast)).